The primary structure comprises 308 residues: Staphylococcal superantigen-like 4 (308 aa).

The N-terminal stretch at methionine 1–alanine 30 is a signal peptide. Positions alanine 28–asparagine 117 are disordered. 2 stretches are compositionally biased toward polar residues: residues proline 33–serine 47 and serine 55–alanine 76. The segment covering threonine 77–proline 93 has biased composition (low complexity). Positions glutamine 94 to threonine 114 are enriched in polar residues. A sialyl Lewis X-binding region spans residues valine 180 to tyrosine 278.

This sequence belongs to the staphylococcal/streptococcal toxin family.

It is found in the secreted. Secreted protein that plays a role in immune innate response inhibition by interfering with host TLR2-mediated pathway. The polypeptide is Staphylococcal superantigen-like 4 (Staphylococcus aureus (strain Newman)).